Here is a 91-residue protein sequence, read N- to C-terminus: Non-specific lipid-transfer protein 1 (91 aa).

Intrachain disulfides connect Cys3-Cys50, Cys13-Cys27, Cys28-Cys73, and Cys48-Cys87.

Belongs to the plant LTP family.

In terms of biological role, plant non-specific lipid-transfer proteins transfer phospholipids as well as galactolipids across membranes. May play a role in wax or cutin deposition in the cell walls of expanding epidermal cells and certain secretory tissues. In Prunus persica (Peach), this protein is Non-specific lipid-transfer protein 1.